The following is a 190-amino-acid chain: NADH-quinone oxidoreductase subunit B (190 aa).

[4Fe-4S] cluster contacts are provided by cysteine 39, cysteine 40, cysteine 104, and cysteine 135.

Belongs to the complex I 20 kDa subunit family. NDH-1 is composed of 14 different subunits. Subunits NuoB, C, D, E, F, and G constitute the peripheral sector of the complex. It depends on [4Fe-4S] cluster as a cofactor.

It is found in the cell inner membrane. The enzyme catalyses a quinone + NADH + 5 H(+)(in) = a quinol + NAD(+) + 4 H(+)(out). Functionally, NDH-1 shuttles electrons from NADH, via FMN and iron-sulfur (Fe-S) centers, to quinones in the respiratory chain. The immediate electron acceptor for the enzyme in this species is believed to be a menaquinone. Couples the redox reaction to proton translocation (for every two electrons transferred, four hydrogen ions are translocated across the cytoplasmic membrane), and thus conserves the redox energy in a proton gradient. This Chlorobium chlorochromatii (strain CaD3) protein is NADH-quinone oxidoreductase subunit B.